We begin with the raw amino-acid sequence, 960 residues long: UvrABC system protein A (960 aa).

Gly-35 to Ser-42 is a binding site for ATP. A C4-type zinc finger spans residues Cys-270–Cys-297. 2 ABC transporter domains span residues Phe-327 to Leu-605 and Gly-625 to Lys-953. Gly-657–Ser-664 lines the ATP pocket. A C4-type zinc finger spans residues Cys-756–Cys-782.

Belongs to the ABC transporter superfamily. UvrA family. As to quaternary structure, forms a heterotetramer with UvrB during the search for lesions.

It localises to the cytoplasm. Its function is as follows. The UvrABC repair system catalyzes the recognition and processing of DNA lesions. UvrA is an ATPase and a DNA-binding protein. A damage recognition complex composed of 2 UvrA and 2 UvrB subunits scans DNA for abnormalities. When the presence of a lesion has been verified by UvrB, the UvrA molecules dissociate. The protein is UvrABC system protein A of Treponema pallidum (strain Nichols).